Reading from the N-terminus, the 778-residue chain is MSEHVMVLGKGNKGISKNSSVNPYESAWLGRWTQSGSEVKFHDGETNCSKQLIRPEDENHGVEVLPFPMFKVSQKRETTTTTTTKPSFHEDVGSSSRAMVNRMPWMYPQGENFSSSNRLDFPIQEKTTQNLLELIRPVRIYATVDSVNLPKEDSHQLLKGSTVSMKLKGKIFGGYLDLFPNQDHSHNRGGVRLQSLESSKDTQEDGPRKNESSAETNTLEMDRLQTIHLSGSISSSSTKGKGIKGYSAIPRTEIPDMNEEPPLVPDRENSVDGHQGETSNSATQSMNVEHFLSRDCKRVRLEPEVEASSRWVKRLKTSPSDSSETKSMMKMKEASLGEKENNNLFLEILKSGINNLQPRNQEPVVSQSNDLRQGGDDITLLHPWIQRWCKKKTTSTDQPTGQEASFEPESHKEFEKKQYPSIAAMALMGKALSGLNPYGLRKTNSLMVWNARDLSFTYRSLRWNLTMADWPLLPNDLLELIMGHLETSFEIFLFRSVCSSWRSVVPPLDHSRCLGIKTHDISFNVGFSFNGRPTNEYCTLKKIPIYLVKFWTPFGDDYLLAEMRERNDGEPKLLLSPLSSNGIKYGMGINKVLFNSLTSPIIPFGQYYEITYIEKRPSEYRFGFPYKLEWVEITERVEFLKLDSEDSRDFAVLFAGRMCNLVMYRSRNMSWTQVVEHPEKYAYQDLVAFKGKFYAVDSSGRGRVFVVELSFEVTEIPSVGGSQQSSKESLVQSGEELLLVQRFTPVGRRYDEYIYIHGSECLDLMKKEERESGFKLMT.

Disordered stretches follow at residues 74 to 95 (QKRETTTTTTTKPSFHEDVGSS), 186 to 283 (HNRG…NSAT), and 316 to 335 (KTSPSDSSETKSMMKMKEAS). Residues 198-212 (SSKDTQEDGPRKNES) are compositionally biased toward basic and acidic residues. A compositionally biased stretch (low complexity) spans 230 to 247 (SGSISSSSTKGKGIKGYS). Over residues 265 to 275 (PDRENSVDGHQ) the composition is skewed to basic and acidic residues. Positions 317–326 (TSPSDSSETK) are enriched in polar residues. One can recognise an F-box domain in the interval 470–505 (WPLLPNDLLELIMGHLETSFEIFLFRSVCSSWRSVV).

Interacts with light-activated phyB. Binds directly to PIF1 and COP1. Post-translationally, ubiquitinated by COP1 in darkness; this leads to proteasomal degradation. As to expression, mainly expressed in cotyledons, hypocotyls, leaves and roots.

It is found in the nucleus. Functionally, together with PCHL, regulates growth and development adaptation to the ambient environment by controlling negatively phytochrome B (phyB) dark reversion, a temperature-dependent thermal relaxation process during which phyB reverts from the active to the inactive state. Contributes to red (R) light-triggered photomorphogenesis. Promotes various light responses such as seed germination, hypocotyl gravitropism and chlorophyll biosynthesis, via direct interaction with PIF1 and COP1. Prevents DNA-binding ability of PIF1 to negatively regulate the expressions of its target genes. Facilitates the physical interaction between phyB and PIF1 and the subsequent light-induced degradation of PIF1. This is Protein PHOTOPERIODIC CONTROL OF HYPOCOTYL 1 from Arabidopsis thaliana (Mouse-ear cress).